The chain runs to 101 residues: Small ribosomal subunit protein bS18c (101 aa).

It belongs to the bacterial ribosomal protein bS18 family. Part of the 30S ribosomal subunit.

Its subcellular location is the plastid. The protein localises to the chloroplast. The polypeptide is Small ribosomal subunit protein bS18c (Morus indica (Mulberry)).